The chain runs to 213 residues: Orotate phosphoribosyltransferase (213 aa).

K26 contributes to the 5-phospho-alpha-D-ribose 1-diphosphate binding site. 34-35 serves as a coordination point for orotate; it reads FF. 5-phospho-alpha-D-ribose 1-diphosphate-binding positions include 72-73, R99, K100, K103, H105, and 124-132; these read YK and DDVITAGTA. The orotate site is built by T128 and R156.

Belongs to the purine/pyrimidine phosphoribosyltransferase family. PyrE subfamily. In terms of assembly, homodimer. The cofactor is Mg(2+).

It catalyses the reaction orotidine 5'-phosphate + diphosphate = orotate + 5-phospho-alpha-D-ribose 1-diphosphate. It functions in the pathway pyrimidine metabolism; UMP biosynthesis via de novo pathway; UMP from orotate: step 1/2. Its function is as follows. Catalyzes the transfer of a ribosyl phosphate group from 5-phosphoribose 1-diphosphate to orotate, leading to the formation of orotidine monophosphate (OMP). The polypeptide is Orotate phosphoribosyltransferase (Edwardsiella ictaluri (strain 93-146)).